The following is a 370-amino-acid chain: tRNA/tmRNA (uracil-C(5))-methyltransferase (370 aa).

S-adenosyl-L-methionine contacts are provided by glutamine 190, tyrosine 218, asparagine 223, glutamate 239, and aspartate 299. Cysteine 324 serves as the catalytic Nucleophile. Residue glutamate 358 is the Proton acceptor of the active site.

Belongs to the class I-like SAM-binding methyltransferase superfamily. RNA M5U methyltransferase family. TrmA subfamily.

It catalyses the reaction uridine(54) in tRNA + S-adenosyl-L-methionine = 5-methyluridine(54) in tRNA + S-adenosyl-L-homocysteine + H(+). The catalysed reaction is uridine(341) in tmRNA + S-adenosyl-L-methionine = 5-methyluridine(341) in tmRNA + S-adenosyl-L-homocysteine + H(+). Dual-specificity methyltransferase that catalyzes the formation of 5-methyluridine at position 54 (m5U54) in all tRNAs, and that of position 341 (m5U341) in tmRNA (transfer-mRNA). This Sodalis glossinidius (strain morsitans) protein is tRNA/tmRNA (uracil-C(5))-methyltransferase.